Consider the following 174-residue polypeptide: MDNGIFIVATIFIVNILYVTIYTVRLLLTMKGYRYLAALSSVFEMIIYVVALSLVLDNLNNIANVLAYAIGFGVGIIVGMKIEERIALGYITVNVITKEYNLDLPNQIRDLGYGVTSWLASGRDGERMMLEILTQRKNERKLYKHIIEIDNGAFIVSSEPKQIHGGFWVKQVRK.

The next 3 helical transmembrane spans lie at 4-24 (GIFI…IYTV), 36-56 (LAAL…SLVL), and 62-82 (IANV…GMKI).

This sequence belongs to the UPF0316 family.

It localises to the cell membrane. The protein is UPF0316 protein LMOf2365_1801 of Listeria monocytogenes serotype 4b (strain F2365).